A 359-amino-acid chain; its full sequence is 3-dehydroquinate synthase (359 aa).

NAD(+) is bound by residues 70–75 (DAEGGK), 104–108 (GAATD), 128–129 (TT), Lys141, and Lys150. Glu183, His246, and His262 together coordinate Zn(2+).

This sequence belongs to the sugar phosphate cyclases superfamily. Dehydroquinate synthase family. The cofactor is Co(2+). Zn(2+) is required as a cofactor. Requires NAD(+) as cofactor.

It localises to the cytoplasm. The enzyme catalyses 7-phospho-2-dehydro-3-deoxy-D-arabino-heptonate = 3-dehydroquinate + phosphate. Its pathway is metabolic intermediate biosynthesis; chorismate biosynthesis; chorismate from D-erythrose 4-phosphate and phosphoenolpyruvate: step 2/7. Catalyzes the conversion of 3-deoxy-D-arabino-heptulosonate 7-phosphate (DAHP) to dehydroquinate (DHQ). In Mycolicibacterium vanbaalenii (strain DSM 7251 / JCM 13017 / BCRC 16820 / KCTC 9966 / NRRL B-24157 / PYR-1) (Mycobacterium vanbaalenii), this protein is 3-dehydroquinate synthase.